A 343-amino-acid chain; its full sequence is 4-hydroxy-2-oxovalerate aldolase 2 (343 aa).

The region spanning 5–255 is the Pyruvate carboxyltransferase domain; sequence ITIVDTTLRD…DTGVDLFPLI (251 aa). Residues 13–14, S167, and H194 contribute to the substrate site; that span reads RD. D14 provides a ligand contact to Mn(2+). Mn(2+)-binding residues include H194 and H196. Residue Y285 coordinates substrate.

This sequence belongs to the 4-hydroxy-2-oxovalerate aldolase family.

The catalysed reaction is (S)-4-hydroxy-2-oxopentanoate = acetaldehyde + pyruvate. This is 4-hydroxy-2-oxovalerate aldolase 2 from Rhodococcus jostii (strain RHA1).